A 150-amino-acid polypeptide reads, in one-letter code: Nucleoside diphosphate kinase (150 aa).

The ATP site is built by lysine 9, phenylalanine 57, arginine 85, threonine 91, arginine 102, and asparagine 112. The active-site Pros-phosphohistidine intermediate is the histidine 115.

This sequence belongs to the NDK family. Mg(2+) is required as a cofactor.

The protein localises to the cytoplasm. The enzyme catalyses a 2'-deoxyribonucleoside 5'-diphosphate + ATP = a 2'-deoxyribonucleoside 5'-triphosphate + ADP. The catalysed reaction is a ribonucleoside 5'-diphosphate + ATP = a ribonucleoside 5'-triphosphate + ADP. In terms of biological role, major role in the synthesis of nucleoside triphosphates other than ATP. The ATP gamma phosphate is transferred to the NDP beta phosphate via a ping-pong mechanism, using a phosphorylated active-site intermediate. The polypeptide is Nucleoside diphosphate kinase (Methanothermobacter thermautotrophicus (strain ATCC 29096 / DSM 1053 / JCM 10044 / NBRC 100330 / Delta H) (Methanobacterium thermoautotrophicum)).